The following is a 167-amino-acid chain: Protein MIX23 (167 aa).

The disordered stretch occupies residues 81–108 (QLDQDRNTSKSPLKSQQQLPSSSTTQVS). A compositionally biased stretch (low complexity) spans 89–106 (SKSPLKSQQQLPSSSTTQ).

Belongs to the MIX23 family.

The protein is Protein MIX23 (cid2) of Schizosaccharomyces pombe (strain 972 / ATCC 24843) (Fission yeast).